The chain runs to 181 residues: Sporozoite-associated mosquito saliva protein 1 (181 aa).

The first 24 residues, 1–24 (MNSSWRVVVFLGLVILCHSRRARA), serve as a signal peptide directing secretion.

In terms of tissue distribution, salivary gland (at protein level). (Microbial infection) Detected with Plasmodium berghei sporozoites isolated from the saliva of infected Anopheles gambiae mosquitoes (at protein level).

It localises to the secreted. Its function is as follows. Decreases host neutrophil chemotaxis induced by N-formylmethionine-leucyl-phenylalanine (fMLP). In terms of biological role, (Microbial infection) Interacts with the surface of Plasmodium berghei sporozoites. Enhances sporozoite gliding activity. Enhances host hepatocyte traversal by sporozoites. This chain is Sporozoite-associated mosquito saliva protein 1, found in Anopheles gambiae (African malaria mosquito).